The sequence spans 506 residues: UDP-glycosyltransferase eriJ (506 aa).

Belongs to the UDP-glycosyltransferase family.

The catalysed reaction is 11-O-acetylcyathatriol + UDP-alpha-D-xylose = erinacine Q + UDP + H(+). It carries out the reaction 11-O-acetylcyathatriol + UDP-alpha-D-glucose = erinacine Q2 + UDP + H(+). Its pathway is secondary metabolite biosynthesis. In terms of biological role, UDP-glycosyltransferase; part of the gene cluster that mediates the biosynthesis of erinacines, cyathane-xylosides that show unique biological activities, including leishmanicidal activity, stimulating activity for nerve growth-factor synthesis, and agonistic activity toward the kappa opioid receptor. Within the pathway, eriJ tranfers xylose from UDP-xylose onto C-14 of 11-O-acetyl-cyathatriol to form eracine Q, and, at a lower rate, glucose from UDP-D-glucose to produce eracine Q2. The first step of the erinacines biosynthesis pathway is catalyzed by the geranylgeranyl diphosphate (GGPP) synthase eriE via conversion of farnesyl pyrophosphate and isopentyl pyrophosphate into geranylgeranyl pyrophosphate (GGPP). GGPP is then substrate of the diterpene cyclase eriG for the production of cyatha-3,12-diene. The cytochrome P450 monooxygenase eriI then hydroxylates cyatha-3,12-diene at C-14 of the seven-membered ring to produce erinacol, which is further hydroxylated at C-15 by the cytochrome P450 monooxygenase eriC to yield cyathadiol. The cytochrome P450 monooxygenase eriA then catalyzes C-11 hydroxylation in the presence of the short chain dehydrogenase/reductase (SDR) eriH, which leads to the production of cyathatriol. The acetyltransferase eriL converts cyathatriol into 11-O-acetyl-cyathatriol. The SDR eriH catalyzes further oxidation of 11-O-acetyl-cyathatriol into 1-O-acetylcyathin A3. Finally, the glycosyl transferase eriJ tranfers xylose from UDP-xylose onto C-14 of 11-O-acetyl-cyathatriol to form eracine Q. EriJ is also able to convert 11-O-acetyl-cyathatriol to eracine Q2 by using UDP-D-glucose as cosubstrate, but at a lower rate. The protein is UDP-glycosyltransferase eriJ of Hericium erinaceus (Lion's mane mushroom).